Consider the following 252-residue polypeptide: Proteasome subunit alpha type-3 (252 aa).

Belongs to the peptidase T1A family. As to quaternary structure, the 26S proteasome consists of a 20S proteasome core and two 19S regulatory subunits. The 20S proteasome core is composed of 28 subunits that are arranged in four stacked rings, resulting in a barrel-shaped structure. The two end rings are each formed by seven alpha subunits, and the two central rings are each formed by seven beta subunits. The catalytic chamber with the active sites is on the inside of the barrel.

It is found in the cytoplasm. The protein localises to the nucleus. The proteasome is a multicatalytic proteinase complex which is characterized by its ability to cleave peptides with Arg, Phe, Tyr, Leu, and Glu adjacent to the leaving group at neutral or slightly basic pH. The proteasome has an ATP-dependent proteolytic activity. In Acanthamoeba castellanii (Amoeba), this protein is Proteasome subunit alpha type-3.